The primary structure comprises 74 residues: Lambda-hexatoxin-Hv1e (74 aa).

An N-terminal signal peptide occupies residues 1–22 (MNTATCFIVLLVVATVIGGIEA). A propeptide spanning residues 23-35 (GEFDMRKDVMGLF) is cleaved from the precursor. 4 cysteine pairs are disulfide-bonded: cysteine 40–cysteine 54, cysteine 47–cysteine 59, cysteine 50–cysteine 51, and cysteine 53–cysteine 69.

Belongs to the neurotoxin 11 (kappa toxin) family. In terms of tissue distribution, expressed by the venom gland.

The protein resides in the secreted. Functionally, this excitatory toxin inhibits insect calcium-activated potassium (KCa) channels (Slo-type). The polypeptide is Lambda-hexatoxin-Hv1e (Hadronyche versuta (Blue mountains funnel-web spider)).